The following is a 59-amino-acid chain: MYGIVMFVNRKEELEFLERKWNENKANLIILYGRRRVGKTMLIKKFLENKKIKRASIFC.

G33 to T40 provides a ligand contact to ATP.

This is an uncharacterized protein from Methanocaldococcus jannaschii (strain ATCC 43067 / DSM 2661 / JAL-1 / JCM 10045 / NBRC 100440) (Methanococcus jannaschii).